The primary structure comprises 98 residues: Large ribosomal subunit protein eL14 (98 aa).

The protein belongs to the eukaryotic ribosomal protein eL14 family.

The protein is Large ribosomal subunit protein eL14 of Hyperthermus butylicus (strain DSM 5456 / JCM 9403 / PLM1-5).